We begin with the raw amino-acid sequence, 56 residues long: UPF0291 protein Clos_1191 (56 aa).

Belongs to the UPF0291 family.

It localises to the cytoplasm. The chain is UPF0291 protein Clos_1191 from Alkaliphilus oremlandii (strain OhILAs) (Clostridium oremlandii (strain OhILAs)).